Consider the following 204-residue polypeptide: Elongation factor Ts (204 aa).

The involved in Mg(2+) ion dislocation from EF-Tu stretch occupies residues T80–V83.

The protein belongs to the EF-Ts family.

It is found in the cytoplasm. In terms of biological role, associates with the EF-Tu.GDP complex and induces the exchange of GDP to GTP. It remains bound to the aminoacyl-tRNA.EF-Tu.GTP complex up to the GTP hydrolysis stage on the ribosome. This Caldicellulosiruptor saccharolyticus (strain ATCC 43494 / DSM 8903 / Tp8T 6331) protein is Elongation factor Ts.